A 430-amino-acid polypeptide reads, in one-letter code: Enolase (430 aa).

Gln167 contributes to the (2R)-2-phosphoglycerate binding site. Glu209 (proton donor) is an active-site residue. Mg(2+)-binding residues include Asp245, Glu286, and Asp313. Residues Lys338, Arg367, Ser368, and Lys389 each contribute to the (2R)-2-phosphoglycerate site. Lys338 (proton acceptor) is an active-site residue.

This sequence belongs to the enolase family. The cofactor is Mg(2+).

It is found in the cytoplasm. Its subcellular location is the secreted. The protein resides in the cell surface. The enzyme catalyses (2R)-2-phosphoglycerate = phosphoenolpyruvate + H2O. Its pathway is carbohydrate degradation; glycolysis; pyruvate from D-glyceraldehyde 3-phosphate: step 4/5. In terms of biological role, catalyzes the reversible conversion of 2-phosphoglycerate (2-PG) into phosphoenolpyruvate (PEP). It is essential for the degradation of carbohydrates via glycolysis. In Synechococcus sp. (strain CC9311), this protein is Enolase.